Here is a 185-residue protein sequence, read N- to C-terminus: Ribosome-recycling factor (185 aa).

It belongs to the RRF family.

Its subcellular location is the cytoplasm. Responsible for the release of ribosomes from messenger RNA at the termination of protein biosynthesis. May increase the efficiency of translation by recycling ribosomes from one round of translation to another. The polypeptide is Ribosome-recycling factor (Halothermothrix orenii (strain H 168 / OCM 544 / DSM 9562)).